Consider the following 264-residue polypeptide: ECF RNA polymerase sigma factor BldN (264 aa).

The interval 1-87 (MYPHVGVDAS…PAADSDSARM (87 aa)) is not required for transcription in vitro. The tract at residues 64–83 (RSSSSGAAATTHRRPAADSD) is disordered. The sigma-70 factor domain-2 stretch occupies residues 105–172 (LYDQYSDTVY…LVADHFKSSR (68 aa)). Residues 129 to 132 (DLTS) carry the Polymerase core binding motif. The segment at 204–255 (ALLDAVRRLNPQQQECVTLRFLQGLSVAETARVMGKNEGAIKTLQYRAVRTL) is sigma-70 factor domain-4.

The protein belongs to the sigma-70 factor family. ECF subfamily. Two forms of protein exist; a 35 kDa form in early growth and a 28 kDa form seen in later stages (at protein level). In liquid culture the larger form accumulates to higher level than on solid media. The shorter form results from processing just upstream of Met-87; the exact position is unknown. There are 4 possible start codons; mutation of the first prevents protein production while mutation of the other 3 (Val-44, Met-87 and Met-88) permits production of both forms. Introduction of stop codons between the first and second, or second and third possible start codons also prevents protein production, corroborating that the annotated start codon is the correct one.

In terms of biological role, sigma factors are initiation factors that promote the attachment of RNA polymerase to specific initiation sites and are then released. Extracytoplasmic function (ECF) sigma factors are usually held in an inactive form by an anti-sigma factor until released. ECF sigma factor involved in aerial mycelium formation, required for translation from the bldMp1 promoter. Expressed as a preprotein; processing and accumulation of the mature protein starts as aerial mycelium formation and sporulation commence. Activates expression of about 17 genes, including those for rdlA and most of the chaplins (chpA to chpH); chaplin activation is indirect. This Streptomyces coelicolor (strain ATCC BAA-471 / A3(2) / M145) protein is ECF RNA polymerase sigma factor BldN.